The primary structure comprises 137 residues: Putative pre-16S rRNA nuclease (137 aa).

This sequence belongs to the YqgF nuclease family.

The protein localises to the cytoplasm. In terms of biological role, could be a nuclease involved in processing of the 5'-end of pre-16S rRNA. This Anaeromyxobacter sp. (strain K) protein is Putative pre-16S rRNA nuclease.